Consider the following 346-residue polypeptide: MAMVSEFLKQARFLENQEQEYVQAVKSYKGGPGSAVSPYPSFNVSSDVAALHKAIMVKGVDEATIIDILTKRTNAQRQQIKAAYLQENGKPLDEVLRKALTGHLEEVVLAMLKTPAQFDADELRGAMKGLGTDEDTLIEILTTRSNEQIREINRVYREELKRDLAKDITSDTSGDFRKALLALAKGDRCQDLSVNQDLADTDARALYEAGERRKGTDVNVFTTILTSRSFPHLRRVFQNYGKYSQHDMNKALDLELKGDIEKCLTTIVKCATSTPAFFAEKLYEAMKGAGTRHKALIRIMVSRSEIDMNEIKVFYQKKYGISLCQAILDETKGDYEKILVALCGGN.

N-acetylalanine is present on Ala-2. Phosphoserine; by TRPM7 is present on Ser-5. An Isoglutamyl lysine isopeptide (Gln-Lys) (interchain with K-?) cross-link involves residue Gln-19. Tyr-21 carries the phosphotyrosine modification. Ser-27 carries the post-translational modification Phosphoserine; by PKC. Phosphoserine is present on residues Ser-34 and Ser-37. 4 Annexin repeats span residues Phe-42 to Lys-113, Thr-114 to Lys-185, Asp-197 to Lys-269, and Ser-273 to Gly-344. Residue Lys-58 is modified to N6-acetyllysine. 11 residues coordinate Ca(2+): Gly-59, Val-60, Glu-62, Arg-97, Leu-100, Glu-105, Met-127, Gly-129, Gly-131, Thr-132, and Glu-134. Residue Thr-136 is modified to Phosphothreonine. 3 residues coordinate Ca(2+): Asp-171, Gly-210, and Arg-213. A Glycyl lysine isopeptide (Lys-Gly) (interchain with G-Cter in SUMO1); alternate cross-link involves residue Lys-214. Lys-214 participates in a covalent cross-link: Glycyl lysine isopeptide (Lys-Gly) (interchain with G-Cter in SUMO2); alternate. 4 residues coordinate Ca(2+): Gly-215, Asp-253, Glu-255, and Leu-256. A Glycyl lysine isopeptide (Lys-Gly) (interchain with G-Cter in SUMO1) cross-link involves residue Lys-257. Ca(2+) contacts are provided by Glu-261, Met-286, Gly-288, and Gly-290. An N6-acetyllysine modification is found at Lys-312. Cys-324 and Cys-343 are joined by a disulfide. Leu-328, Glu-330, and Thr-331 together coordinate Ca(2+). Residue Lys-332 forms a Glycyl lysine isopeptide (Lys-Gly) (interchain with G-Cter in SUMO1) linkage. Glu-336 provides a ligand contact to Ca(2+).

This sequence belongs to the annexin family. Homodimer; non-covalently linked. Homodimer; linked by transglutamylation. Homodimers linked by transglutamylation are observed in placenta, but not in other tissues. Interacts with S100A11. Heterotetramer, formed by two molecules each of S100A11 and ANXA1. Interacts with DYSF. Interacts with EGFR. Post-translationally, phosphorylated by protein kinase C, EGFR and TRPM7. Phosphorylated in response to EGF treatment. Sumoylated. In terms of processing, proteolytically cleaved by cathepsin CTSG to release the active N-terminal peptide Ac2-26. In terms of tissue distribution, detected in lung. Detected at the apical membrane of airway epithelial cells. Detected in intestinal epithelial cells. Detected in skeletal muscle. Detected in prostate. Detected in thymus (at protein level). Detected in stomach, lung, spleen, ovary and uterus, and at lower levels in kidney, thymus and heart.

The protein resides in the nucleus. It localises to the cytoplasm. Its subcellular location is the cell projection. The protein localises to the cilium. It is found in the basolateral cell membrane. The protein resides in the lateral cell membrane. It localises to the cell membrane. Its subcellular location is the apical cell membrane. The protein localises to the membrane. It is found in the early endosome. The protein resides in the cytoplasmic vesicle membrane. It localises to the endosome membrane. Its subcellular location is the secreted. The protein localises to the extracellular space. It is found in the extracellular exosome. The protein resides in the cytoplasmic vesicle. It localises to the secretory vesicle lumen. Its subcellular location is the phagocytic cup. Its function is as follows. Plays important roles in the innate immune response as effector of glucocorticoid-mediated responses and regulator of the inflammatory process. Has anti-inflammatory activity. Plays a role in glucocorticoid-mediated down-regulation of the early phase of the inflammatory response. Contributes to the adaptive immune response by enhancing signaling cascades that are triggered by T-cell activation, regulates differentiation and proliferation of activated T-cells. Promotes the differentiation of T-cells into Th1 cells and negatively regulates differentiation into Th2 cells. Has no effect on unstimulated T-cells. Negatively regulates hormone exocytosis via activation of the formyl peptide receptors and reorganization of the actin cytoskeleton. Has high affinity for Ca(2+) and can bind up to eight Ca(2+) ions. Displays Ca(2+)-dependent binding to phospholipid membranes. Plays a role in the formation of phagocytic cups and phagosomes. Plays a role in phagocytosis by mediating the Ca(2+)-dependent interaction between phagosomes and the actin cytoskeleton. Functions at least in part by activating the formyl peptide receptors and downstream signaling cascades. Promotes chemotaxis of granulocytes and monocytes via activation of the formyl peptide receptors. Promotes rearrangement of the actin cytoskeleton, cell polarization and cell migration. Promotes resolution of inflammation and wound healing. Acts via neutrophil N-formyl peptide receptors to enhance the release of CXCL2. This chain is Annexin A1 (Anxa1), found in Mus musculus (Mouse).